The sequence spans 273 residues: 6-carboxyhexanoate--CoA ligase (273 aa).

It belongs to the BioW family. In terms of assembly, homodimer. Mg(2+) is required as a cofactor.

The enzyme catalyses heptanedioate + ATP + CoA = 6-carboxyhexanoyl-CoA + AMP + diphosphate. The protein operates within metabolic intermediate metabolism; pimeloyl-CoA biosynthesis; pimeloyl-CoA from pimelate: step 1/1. Its function is as follows. Catalyzes the transformation of pimelate into pimeloyl-CoA with concomitant hydrolysis of ATP to AMP. The sequence is that of 6-carboxyhexanoate--CoA ligase from Alkalihalophilus pseudofirmus (strain ATCC BAA-2126 / JCM 17055 / OF4) (Bacillus pseudofirmus).